The primary structure comprises 410 residues: BTB and MATH domain-containing protein 42 (410 aa).

Positions 1–19 are enriched in polar residues; that stretch reads MSSRSSWSSTEQINRTISS. The interval 1–29 is disordered; that stretch reads MSSRSSWSSTEQINRTISSRADDLPPQPR. Residues 45-173 enclose the MATH domain; it reads STKLEWKIEQ…DGTLFLICEV (129 aa). A BTB domain is found at 219 to 287; the sequence is TDCVIHVGNK…MYTGATESLE (69 aa). Positions 389–410 are disordered; that stretch reads TSNIPISVSPPPARKRLRRSAK. Basic residues predominate over residues 401–410; that stretch reads ARKRLRRSAK.

As to quaternary structure, interacts with cul-3.

It participates in protein modification; protein ubiquitination. Functionally, probable substrate-specific adapter of an E3 ubiquitin-protein ligase complex which mediates the ubiquitination and subsequent proteasomal degradation of target proteins. This is BTB and MATH domain-containing protein 42 (bath-42) from Caenorhabditis elegans.